The primary structure comprises 375 residues: GDP-mannose transporter GONST2 (375 aa).

Transmembrane regions (helical) follow at residues 79–99, 112–132, 141–161, 165–185, 199–219, 262–282, 300–320, 327–347, and 349–369; these read LVSGAAYCISSCSMIILNKIV, MLYQNLISCLVVAVLDISGVV, LIRVWMPVNVIFVGMLVSGMY, YINVAMVTILKNATNILTGIG, WAAMFMMIISAISGGITDLTF, MVLLNNLLSIPFGIILIILLG, VVATASGFLGLAISFTSMWFL, TYSLVGSLNKVPISLAGLVLF, and VPLSLPNLFSILFGLFAGVVF.

Belongs to the nucleotide-sugar transporter family. GDP-Mannose:GMP antiporter (GMA) (TC 2.A.7.13) subfamily. Expressed in rosette leaves, stems, flowers and siliques.

It localises to the golgi apparatus membrane. In terms of biological role, GDP-mannose transporter that may be involved in the import of GDP-mannose from the cytoplasm into the Golgi lumen. The sequence is that of GDP-mannose transporter GONST2 from Arabidopsis thaliana (Mouse-ear cress).